We begin with the raw amino-acid sequence, 342 residues long: Ferredoxin--NADP reductase (342 aa).

Positions 17, 36, 44, 49, 89, 124, 289, and 330 each coordinate FAD.

It belongs to the ferredoxin--NADP reductase type 2 family. As to quaternary structure, homodimer. FAD serves as cofactor.

The catalysed reaction is 2 reduced [2Fe-2S]-[ferredoxin] + NADP(+) + H(+) = 2 oxidized [2Fe-2S]-[ferredoxin] + NADPH. This is Ferredoxin--NADP reductase from Bradyrhizobium sp. (strain ORS 278).